Reading from the N-terminus, the 193-residue chain is Annexin-2 receptor (193 aa).

Residues Gln78–Lys87 are compositionally biased toward polar residues. The tract at residues Gln78–Glu111 is disordered.

In terms of tissue distribution, widely expressed. Highly expressed in lymphocytes. Expressed in both resting CD4(+) and CD8(+) T-cells.

In terms of biological role, may act as a receptor for annexin II on marrow stromal cells to induce osteoclast formation. The chain is Annexin-2 receptor (ANXA2R) from Homo sapiens (Human).